We begin with the raw amino-acid sequence, 313 residues long: Putative stilbene synthase 2 (313 aa).

The active site involves cysteine 88. Substrate-binding positions include leucine 191 and 229-231 (GGP).

The protein belongs to the thiolase-like superfamily. Chalcone/stilbene synthases family. As to quaternary structure, homodimer.

The protein resides in the cytoplasm. It catalyses the reaction 4-coumaroyl-CoA + 3 malonyl-CoA + 3 H(+) = trans-resveratrol + 4 CO2 + 4 CoA. The protein operates within phytoalexin biosynthesis; 3,4',5-trihydroxystilbene biosynthesis; 3,4',5-trihydroxystilbene from trans-4-coumarate: step 2/2. The protein is Putative stilbene synthase 2 of Arachis hypogaea (Peanut).